Here is a 682-residue protein sequence, read N- to C-terminus: Heat shock 70 kDa protein 10, mitochondrial (682 aa).

The N-terminal 50 residues, 1–50 (MATAALLRSIRRREVVSSPFSAYRCLSSSGKASLNSSYLGQNFRSFSRAF), are a transit peptide targeting the mitochondrion. A disordered region spans residues 646-682 (KIGEHMSGGSGGGSAPGGGSEGGSDQAPEAEYEEVKK). A compositionally biased stretch (gly residues) spans 651–667 (MSGGSGGGSAPGGGSEG). The span at 673–682 (PEAEYEEVKK) shows a compositional bias: acidic residues.

This sequence belongs to the heat shock protein 70 (TC 1.A.33) family. DnaK subfamily.

It is found in the mitochondrion. Chaperone involved in the maturation of iron-sulfur [Fe-S] cluster-containing proteins. Has a low intrinsic ATPase activity which is markedly stimulated by HSCB and ISU1. In cooperation with other chaperones, Hsp70s are key components that facilitate folding of de novo synthesized proteins, assist translocation of precursor proteins into organelles, and are responsible for degradation of damaged protein under stress conditions. This Arabidopsis thaliana (Mouse-ear cress) protein is Heat shock 70 kDa protein 10, mitochondrial.